The sequence spans 62 residues: Protein UL148D (62 aa).

The chain crosses the membrane as a helical span at residues 30–50 (WWISVAIVIFIGVCLVALMYF).

The protein localises to the host membrane. This is Protein UL148D (UL148D) from Human cytomegalovirus (strain Merlin) (HHV-5).